The following is a 323-amino-acid chain: Vertebrate ancient opsin (323 aa).

The Extracellular segment spans residues methionine 1–asparagine 38. Residues phenylalanine 39–alanine 63 traverse the membrane as a helical segment. Residues threonine 64–asparagine 75 lie on the Cytoplasmic side of the membrane. Residues tyrosine 76–asparagine 100 form a helical membrane-spanning segment. The Extracellular segment spans residues alanine 101 to glutamate 115. Cysteine 112 and cysteine 189 form a disulfide bridge. A helical membrane pass occupies residues glycine 116–phenylalanine 135. The Cytoplasmic portion of the chain corresponds to glutamate 136 to histidine 154. The helical transmembrane segment at alanine 155–cysteine 178 threads the bilayer. The Extracellular segment spans residues serine 179–threonine 202. An N-linked (GlcNAc...) asparagine glycan is attached at asparagine 200. A helical transmembrane segment spans residues tyrosine 203–leucine 230. The Cytoplasmic segment spans residues arginine 231–arginine 250. The chain crosses the membrane as a helical span at residues methionine 251–threonine 274. Residues alanine 275–aspartate 282 are Extracellular-facing. A helical transmembrane segment spans residues proline 283–methionine 307. N6-(retinylidene)lysine is present on lysine 294. Over asparagine 308–alanine 323 the chain is Cytoplasmic.

Belongs to the G-protein coupled receptor 1 family. Opsin subfamily. In terms of processing, phosphorylated on some or all of the serine and threonine residues present in the C-terminal region.

It is found in the membrane. The chain is Vertebrate ancient opsin from Salmo salar (Atlantic salmon).